The chain runs to 440 residues: tRNA(Ile)-lysidine synthase (440 aa).

19-24 serves as a coordination point for ATP; sequence SGGLDS.

The protein belongs to the tRNA(Ile)-lysidine synthase family.

It is found in the cytoplasm. The catalysed reaction is cytidine(34) in tRNA(Ile2) + L-lysine + ATP = lysidine(34) in tRNA(Ile2) + AMP + diphosphate + H(+). Its function is as follows. Ligates lysine onto the cytidine present at position 34 of the AUA codon-specific tRNA(Ile) that contains the anticodon CAU, in an ATP-dependent manner. Cytidine is converted to lysidine, thus changing the amino acid specificity of the tRNA from methionine to isoleucine. This chain is tRNA(Ile)-lysidine synthase, found in Buchnera aphidicola subsp. Acyrthosiphon pisum (strain APS) (Acyrthosiphon pisum symbiotic bacterium).